The sequence spans 405 residues: L-rhamnonate dehydratase (405 aa).

Substrate-binding residues include His33 and Arg59. Mg(2+) is bound by residues Asp226, Glu252, and Glu280. The active-site Proton acceptor is the His329. Position 349 (Glu349) interacts with substrate.

It belongs to the mandelate racemase/muconate lactonizing enzyme family. RhamD subfamily. In terms of assembly, homooctamer; tetramer of dimers. It depends on Mg(2+) as a cofactor.

It carries out the reaction L-rhamnonate = 2-dehydro-3-deoxy-L-rhamnonate + H2O. Its function is as follows. Catalyzes the dehydration of L-rhamnonate to 2-keto-3-deoxy-L-rhamnonate (KDR). This is L-rhamnonate dehydratase from Escherichia coli (strain K12 / DH10B).